We begin with the raw amino-acid sequence, 125 residues long: Prefoldin subunit beta (125 aa).

The protein belongs to the prefoldin subunit beta family. In terms of assembly, heterohexamer of two alpha and four beta subunits.

It localises to the cytoplasm. In terms of biological role, molecular chaperone capable of stabilizing a range of proteins. Seems to fulfill an ATP-independent, HSP70-like function in archaeal de novo protein folding. The polypeptide is Prefoldin subunit beta (Pyrobaculum calidifontis (strain DSM 21063 / JCM 11548 / VA1)).